Consider the following 710-residue polypeptide: Integrator complex subunit 10 (710 aa).

Residues serine 231, serine 381, and serine 382 each carry the phosphoserine modification. Lysine 464 is covalently cross-linked (Glycyl lysine isopeptide (Lys-Gly) (interchain with G-Cter in SUMO2)).

It belongs to the Integrator subunit 10 family. Component of the Integrator complex, composed of core subunits INTS1, INTS2, INTS3, INTS4, INTS5, INTS6, INTS7, INTS8, INTS9/RC74, INTS10, INTS11/CPSF3L, INTS12, INTS13, INTS14 and INTS15. The core complex associates with protein phosphatase 2A subunits PPP2CA and PPP2R1A, to form the Integrator-PP2A (INTAC) complex. INTS10 is part of the tail subcomplex, composed of INTS10, INTS13, INTS14 and INTS15.

The protein localises to the nucleus. Functionally, component of the integrator complex, a multiprotein complex that terminates RNA polymerase II (Pol II) transcription in the promoter-proximal region of genes. The integrator complex provides a quality checkpoint during transcription elongation by driving premature transcription termination of transcripts that are unfavorably configured for transcriptional elongation: the complex terminates transcription by (1) catalyzing dephosphorylation of the C-terminal domain (CTD) of Pol II subunit POLR2A/RPB1 and SUPT5H/SPT5, (2) degrading the exiting nascent RNA transcript via endonuclease activity and (3) promoting the release of Pol II from bound DNA. The integrator complex is also involved in terminating the synthesis of non-coding Pol II transcripts, such as enhancer RNAs (eRNAs), small nuclear RNAs (snRNAs), telomerase RNAs and long non-coding RNAs (lncRNAs). Within the integrator complex, INTS10 is part of the integrator tail module that acts as a platform for the recruitment of transcription factors at promoters. May be not involved in the recruitment of cytoplasmic dynein to the nuclear envelope, probably as component of the integrator complex. In Mus musculus (Mouse), this protein is Integrator complex subunit 10 (Ints10).